The chain runs to 479 residues: Membrane-bound lytic murein transglycosylase F (479 aa).

Residues 1–18 (MKGLFIRIVLAICLSLWA) form the signal peptide. A non-LT domain region spans residues 19–266 (IDMVFPWQQI…RIEEKYFNHL (248 aa)). The LT domain stretch occupies residues 267 to 479 (NQFDYVDTRS…ISTQTQQEQR (213 aa)). Residue glutamate 311 is part of the active site.

This sequence in the N-terminal section; belongs to the bacterial solute-binding protein 3 family. It in the C-terminal section; belongs to the transglycosylase Slt family.

It is found in the cell outer membrane. The enzyme catalyses Exolytic cleavage of the (1-&gt;4)-beta-glycosidic linkage between N-acetylmuramic acid (MurNAc) and N-acetylglucosamine (GlcNAc) residues in peptidoglycan, from either the reducing or the non-reducing ends of the peptidoglycan chains, with concomitant formation of a 1,6-anhydrobond in the MurNAc residue.. Its function is as follows. Murein-degrading enzyme that degrades murein glycan strands and insoluble, high-molecular weight murein sacculi, with the concomitant formation of a 1,6-anhydromuramoyl product. Lytic transglycosylases (LTs) play an integral role in the metabolism of the peptidoglycan (PG) sacculus. Their lytic action creates space within the PG sacculus to allow for its expansion as well as for the insertion of various structures such as secretion systems and flagella. In Histophilus somni (strain 2336) (Haemophilus somnus), this protein is Membrane-bound lytic murein transglycosylase F.